The chain runs to 283 residues: Stage II sporulation protein Q (283 aa).

A helical membrane pass occupies residues 22 to 42; that stretch reads WVFPAIYLVSAAVILTAVLWY. The interval 228-283 is disordered; that stretch reads EKAATQETEESIQQSSEKKDGSTEKGTEEKSGEKKDDSTDKSGSKESSTTEDTEQS. A compositionally biased stretch (basic and acidic residues) spans 243–271; that stretch reads SEKKDGSTEKGTEEKSGEKKDDSTDKSGS.

As to quaternary structure, interacts with SpoIIIAH and SpoIIE.

The protein localises to the forespore membrane. Its function is as follows. Involved in forespore engulfment and required for anchoring membrane proteins on the forespore side of the septal membrane. Forms a channel with SpoIIIAH that is open on the forespore end and closed (or gated) on the mother cell end. This allows sigma-E-directed gene expression in the mother-cell compartment of the sporangium to trigger the activation of sigma-G forespore-specific gene expression by a pathway of intercellular signaling. The protein is Stage II sporulation protein Q (spoIIQ) of Bacillus subtilis (strain 168).